A 200-amino-acid chain; its full sequence is Adenylate kinase (200 aa).

An ATP-binding site is contributed by 10-15 (GAGKGT). Residues 30–59 (STGDMLRAAVAAETPVGLEAKAIMESGGLV) form an NMP region. Residues Thr-31, Arg-36, 57 to 59 (GLV), 85 to 88 (GFPR), and Gln-92 contribute to the AMP site. Positions 126–142 (KRAEETAARGQPVRKDD) are LID. Residue Arg-127 coordinates ATP. 2 residues coordinate AMP: Arg-139 and Arg-150. Lys-178 is a binding site for ATP.

It belongs to the adenylate kinase family. As to quaternary structure, monomer.

Its subcellular location is the cytoplasm. It catalyses the reaction AMP + ATP = 2 ADP. The protein operates within purine metabolism; AMP biosynthesis via salvage pathway; AMP from ADP: step 1/1. Catalyzes the reversible transfer of the terminal phosphate group between ATP and AMP. Plays an important role in cellular energy homeostasis and in adenine nucleotide metabolism. This Methylorubrum extorquens (strain PA1) (Methylobacterium extorquens) protein is Adenylate kinase.